A 590-amino-acid chain; its full sequence is MATIEEIAHQIIDQQMGEIVTEQQTGQKIQIVTALDHSTQGKQFILANHEGSTPGKVFLTTPDAAGVNQLFFASPDLSTPHLQLLTENSPDQGPNKVFDLCVVCGDKASGRHYGAITCEGCKGFFKRSIRKNLVYSCRGSKDCIINKHHRNRCQYCRLQRCIAFGMKQDSVQCERKPIEVSREKSSNCAASTEKIYIRKDLRSPLAATPTFVTDSETARSTGLLDSGMFVNIHPSGIKTEPALLMTPDKAESCQGDLGTLASVVTSLANLGKAKDLSHCGGDLPVVQSLRNGDTSFGAFHQDIQTNGDVSRAFDNLAKALTPGENPACQSPGESMEGSTHLIAGEPSCMEREGPLLSDSHVVFRLTMPSPMPEYLNVHYIGESASRLLFLSMHWALSIPSFQALGQENSISLVKAYWNELFTLGLAQCWQVMNVATILATFVNCLHNSLQQDKMSPERRKLLMEHIFKLQEFCNSMVKLCIDGHEYAYLKAIVLFSPDHPGLENMELIEKFQEKAYVEFQDYITRTYPDDTYRLSRLLLRLPALRLMNATITEELFFKGLIGNVRIDSVIPHILKMEPADYNSQIIGHSL.

Residues 1–166 are required for interaction with KAT2B; that stretch reads MATIEEIAHQ…RLQRCIAFGM (166 aa). A DNA-binding region (nuclear receptor) is located at residues 98 to 173; the sequence is FDLCVVCGDK…FGMKQDSVQC (76 aa). 2 consecutive NR C4-type zinc fingers follow at residues 101–121 and 137–156; these read CVVCGDKASGRHYGAITCEGC and CRGSKDCIINKHHRNRCQYC. Residues serine 185 and serine 203 each carry the phosphoserine modification. The residue at position 208 (threonine 208) is a Phosphothreonine. At threonine 210 the chain carries Phosphothreonine; by MAPK1. Lysine 238 participates in a covalent cross-link: Glycyl lysine isopeptide (Lys-Gly) (interchain with G-Cter in SUMO); alternate. Lysine 238 participates in a covalent cross-link: Glycyl lysine isopeptide (Lys-Gly) (interchain with G-Cter in SUMO2); alternate. One can recognise an NR LBD domain in the interval 333 to 577; the sequence is ESMEGSTHLI…SVIPHILKME (245 aa). Position 568 is a phosphoserine; by PKC (serine 568). The segment at 571-590 is required for interaction with NRIP1; it reads PHILKMEPADYNSQIIGHSL. Residue lysine 575 forms a Glycyl lysine isopeptide (Lys-Gly) (interchain with G-Cter in SUMO2) linkage.

It belongs to the nuclear hormone receptor family. NR2 subfamily. Homodimer. Heterodimer; with NR2C2 which is required for chromatin remodeling and for binding to promoter regions such as globin DR1 repeats. Interacts with ESR1; the interaction prevents homodimerization of ESR1 and suppresses its transcriptional activity and cell growth. Interacts with NRIP1 (via its LXXLL motifs); the interaction provides corepressor activity. Interacts with HDAC3 (via the DNA-binding domain); the interaction recruits phosphorylated NR2C1 to PML bodies for sumoylation. Interacts with HDAC4 (via the DNA-binding domain). Interacts with PIAS1; the interaction is required for sumoylation of NR2C1. Interacts with UBE2I; the interaction is required for sumoylation of NR2C1. Interacts with KAT2B; the interaction acts as a corepressor of gene expression. In terms of processing, sumoylation requires both PIAS1 and UBE2I. Sumoylation appears to dissociate NR2C1 from the PML nuclear bodies. Enhances the interaction with NRIP1 but inhibits interaction with KAT2B. In proliferating cells, stimulation by all-trans retinoic acid, activation of MAPK1-mediated phosphorylation and recruitment to PML bodies with subsequent sumoylation, suppresses OCT4 expression. Post-translationally, phosphorylated on several serine and threonine residues. Phosphorylation on Thr-210, stimulated by all-trans retinoic acid (atRA) mediates PML location and sumoylation in proliferating cells which then modulates its association with effector molecules, KAT2B and NRIP1. Phosphorylation on Ser-568 by PKC is important for protein stability and function as activator of RARB.

It is found in the nucleus. The protein localises to the PML body. Orphan nuclear receptor. Binds the IR7 element in the promoter of its own gene in an autoregulatory negative feedback mechanism. Primarily repressor of a broad range of genes including ESR1 and RARB. Together with NR2C2, forms the core of the DRED (direct repeat erythroid-definitive) complex that represses embryonic and fetal globin transcription. Binds to hormone response elements (HREs) consisting of two 5'-AGGTCA-3' half site direct repeat consensus sequences. Also activator of OCT4 gene expression. Plays a fundamental role in early embryogenesis and regulates embryonic stem cell proliferation and differentiation. Mediator of retinoic acid-regulated preadipocyte proliferation. The chain is Nuclear receptor subfamily 2 group C member 1 (Nr2c1) from Rattus norvegicus (Rat).